An 84-amino-acid chain; its full sequence is Small ribosomal subunit protein uS17 (84 aa).

This sequence belongs to the universal ribosomal protein uS17 family. Part of the 30S ribosomal subunit.

In terms of biological role, one of the primary rRNA binding proteins, it binds specifically to the 5'-end of 16S ribosomal RNA. The chain is Small ribosomal subunit protein uS17 from Shigella boydii serotype 18 (strain CDC 3083-94 / BS512).